The chain runs to 164 residues: ATP synthase subunit b (164 aa).

A helical transmembrane segment spans residues 10–32; it reads AVAFVLFFVLFGKKLWTPLAAAL.

This sequence belongs to the ATPase B chain family. In terms of assembly, F-type ATPases have 2 components, F(1) - the catalytic core - and F(0) - the membrane proton channel. F(1) has five subunits: alpha(3), beta(3), gamma(1), delta(1), epsilon(1). F(0) has three main subunits: a(1), b(2) and c(10-14). The alpha and beta chains form an alternating ring which encloses part of the gamma chain. F(1) is attached to F(0) by a central stalk formed by the gamma and epsilon chains, while a peripheral stalk is formed by the delta and b chains.

Its subcellular location is the cell inner membrane. Functionally, f(1)F(0) ATP synthase produces ATP from ADP in the presence of a proton or sodium gradient. F-type ATPases consist of two structural domains, F(1) containing the extramembraneous catalytic core and F(0) containing the membrane proton channel, linked together by a central stalk and a peripheral stalk. During catalysis, ATP synthesis in the catalytic domain of F(1) is coupled via a rotary mechanism of the central stalk subunits to proton translocation. Component of the F(0) channel, it forms part of the peripheral stalk, linking F(1) to F(0). The polypeptide is ATP synthase subunit b (Gluconacetobacter diazotrophicus (strain ATCC 49037 / DSM 5601 / CCUG 37298 / CIP 103539 / LMG 7603 / PAl5)).